The chain runs to 492 residues: E3 ubiquitin-protein ligase XIAP (492 aa).

BIR repeat units follow at residues 40–105 (RLAS…KFIN), 172–237 (RLQT…YFVL), and 271–334 (RLET…KFLI). Zn(2+) is bound by residues Cys-303, Cys-306, His-323, and Cys-330. The segment at 445-480 (CKVCMDRRISIVFIPCGHLVACAVCADVLDKCPICC) adopts an RING-type zinc-finger fold.

Belongs to the IAP family. In terms of assembly, monomer, and homodimer. Post-translationally, degraded in a 2-step mechanism; a caspase-independent first step and a caspase-dependent second step. Stabilized indirectly by MAPK, which acts to delay caspase activation, rather than directly phosphorylating xiap.

It localises to the cytoplasm. It catalyses the reaction S-ubiquitinyl-[E2 ubiquitin-conjugating enzyme]-L-cysteine + [acceptor protein]-L-lysine = [E2 ubiquitin-conjugating enzyme]-L-cysteine + N(6)-ubiquitinyl-[acceptor protein]-L-lysine.. Its function is as follows. Multi-functional protein which regulates not only caspases and apoptosis, but also acts as an E3 ubiquitin-protein ligase mediating ubiquitination and subsequent proteasomal degradation of its target proteins. Acts as a direct caspase inhibitor. E3 ubiquitin-protein ligase that acts as an important regulator of innate immunity by mediating 'Lys-63'-linked polyubiquitination of ripk2 downstream of NOD1 and NOD2, thereby transforming ripk2 into a scaffolding protein for downstream effectors, ultimately leading to activation of the NF-kappa-B and MAP kinases signaling. A key apoptotic suppressor in eggs. Acts as a positive regulator of Wnt signaling. The chain is E3 ubiquitin-protein ligase XIAP (xiap) from Xenopus tropicalis (Western clawed frog).